We begin with the raw amino-acid sequence, 94 residues long: Integration host factor subunit beta (94 aa).

This sequence belongs to the bacterial histone-like protein family. As to quaternary structure, heterodimer of an alpha and a beta chain.

This protein is one of the two subunits of integration host factor, a specific DNA-binding protein that functions in genetic recombination as well as in transcriptional and translational control. The sequence is that of Integration host factor subunit beta from Escherichia fergusonii (strain ATCC 35469 / DSM 13698 / CCUG 18766 / IAM 14443 / JCM 21226 / LMG 7866 / NBRC 102419 / NCTC 12128 / CDC 0568-73).